The chain runs to 328 residues: Solute-binding protein Bamb_6123 (328 aa).

A signal peptide spans 1-26 (MTHRFPRSRTALAVALMAGFAMSAQA). Positions 35, 73, 89, 149, 209, and 236 each coordinate beta-D-galacturonate. Residues His-35, Glu-73, Arg-89, Arg-149, Asn-209, and Glu-236 each contribute to the beta-D-glucuronate site.

This sequence belongs to the bacterial solute-binding protein 7 family. In terms of assembly, the complex is comprised of an extracytoplasmic solute-binding protein and a heteromeric permease formed by two transmembrane proteins.

It localises to the periplasm. Its function is as follows. Solute-binding protein that binds D-galacturonate and D-glucuronate (in vitro). Probably part of a tripartite ATP-independent periplasmic (TRAP) transport system that mediates solute transport into the cytoplasm. In Burkholderia ambifaria (strain ATCC BAA-244 / DSM 16087 / CCUG 44356 / LMG 19182 / AMMD) (Burkholderia cepacia (strain AMMD)), this protein is Solute-binding protein Bamb_6123.